A 568-amino-acid chain; its full sequence is O-fucosyltransferase 9 (568 aa).

Low complexity predominate over residues 1–19 (MHGLSRLGNGSSNGRINIP). The tract at residues 1–33 (MHGLSRLGNGSSNGRINIPSPSPPSSPRIRHTR) is disordered. A helical; Signal-anchor for type II membrane protein transmembrane segment spans residues 65–85 (LLLAPLLYIAGMLLFMGSFGF). N-linked (GlcNAc...) asparagine glycosylation is found at asparagine 125, asparagine 151, asparagine 189, and asparagine 243. 336–338 (HLR) lines the substrate pocket. Asparagine 408 and asparagine 409 each carry an N-linked (GlcNAc...) asparagine glycan.

It belongs to the glycosyltransferase GT106 family.

Its subcellular location is the membrane. Its pathway is glycan metabolism. This chain is O-fucosyltransferase 9, found in Arabidopsis thaliana (Mouse-ear cress).